The chain runs to 71 residues: Serine palmitoyltransferase small subunit A (71 aa).

The Cytoplasmic segment spans residues 1–12 (MAGMALARAWKQ). A helical transmembrane segment spans residues 13 to 29 (MSWFYYQYLLVTALYML). Over 30–34 (EPWER) the chain is Lumenal. A helical membrane pass occupies residues 35–57 (TVFNSMLVSVVGMALYTGYVFMP). The Cytoplasmic portion of the chain corresponds to 58-71 (QHIMAILHYFEIVQ).

It belongs to the SPTSS family. SPTSSA subfamily. In terms of assembly, component of the serine palmitoyltransferase (SPT) complex, which is composed of SPTLC1, SPTLC2 or SPTLC3 and SPTSSA or SPTSSB. The heterodimer consisting of SPTLC1 and SPTLC2/SPTLC3 forms the catalytic core of the enzyme, while SPTSSA or SPTSSB subunits determine substrate specificity. SPT also interacts with ORMDL proteins, especially ORMDL3, which negatively regulate SPT activity in the presence of ceramides. Interacts with MBOAT7; the interaction plays a role in MBOAT7 localization to mitochondria-associated membranes.

The protein resides in the endoplasmic reticulum membrane. It participates in lipid metabolism; sphingolipid metabolism. Its function is as follows. Component of the serine palmitoyltransferase multisubunit enzyme (SPT) that catalyzes the initial and rate-limiting step in sphingolipid biosynthesis by condensing L-serine and activated acyl-CoA (most commonly palmitoyl-CoA) to form long-chain bases. The SPT complex is composed of SPTLC1, SPTLC2 or SPTLC3 and SPTSSA or SPTSSB. Within this complex, the heterodimer consisting of SPTLC1 and SPTLC2/SPTLC3 forms the catalytic core. Within the SPT complex, SPTSSA stimulates the catalytic activity and plays a role in substrate specificity, which depends upon the overall complex composition. The SPTLC1-SPTLC2-SPTSSA complex shows a strong preference for C16-CoA substrate, while the SPTLC1-SPTLC3-SPTSSA isozyme uses both C14-CoA and C16-CoA as substrates, with a slight preference for C14-CoA. Independently of its action as a SPT component, may be involved in MBOAT7 localization to mitochondria-associated membranes, a membrane bridge between the endoplasmic reticulum and mitochondria, may hence affect MBOAT7-catalyzed incorporation of arachidonic acid into phosphatidylinositol. The chain is Serine palmitoyltransferase small subunit A from Mus musculus (Mouse).